The chain runs to 129 residues: Sigma factor-binding protein Crl (129 aa).

The interval 99 to 119 is essential for activity; sequence TQAEFHKKLVKTLRERFEISV.

This sequence belongs to the Crl family.

The protein localises to the cytoplasm. Binds to the sigma-S subunit of RNA polymerase, activating expression of sigma-S-regulated genes. Stimulates RNA polymerase holoenzyme formation and may bind to several other sigma factors, such as sigma-70 and sigma-32. The chain is Sigma factor-binding protein Crl from Vibrio cholerae serotype O1 (strain ATCC 39541 / Classical Ogawa 395 / O395).